A 237-amino-acid chain; its full sequence is Undecaprenyl-diphosphatase (237 aa).

7 helical membrane-spanning segments follow: residues 38–58 (QTAVLHLGTLVSVVLFALDGI), 65–85 (WRIILNLIVSTIPAGVFGVLF), 92–112 (LFSSPRFLPLFFSATALILMF), 126–146 (MSFLDALLVGIAQLFALFPGI), 166–186 (ALQYSFLMSIPVVLGAGILGL), 191–211 (VTILAPIFAFLSGLFALYVLS), and 217–237 (GKIWQFSYYCLFVAILSYLAG).

Belongs to the UppP family.

The protein resides in the cell inner membrane. The catalysed reaction is di-trans,octa-cis-undecaprenyl diphosphate + H2O = di-trans,octa-cis-undecaprenyl phosphate + phosphate + H(+). In terms of biological role, catalyzes the dephosphorylation of undecaprenyl diphosphate (UPP). Confers resistance to bacitracin. The sequence is that of Undecaprenyl-diphosphatase from Thermotoga maritima (strain ATCC 43589 / DSM 3109 / JCM 10099 / NBRC 100826 / MSB8).